We begin with the raw amino-acid sequence, 404 residues long: Argininosuccinate synthase (404 aa).

ATP contacts are provided by residues 12 to 20 (AYSGGLDTS) and A39. L-citrulline is bound by residues Y91 and S96. Position 121 (G121) interacts with ATP. The L-aspartate site is built by T123, N127, and D128. N127 is a binding site for L-citrulline. 5 residues coordinate L-citrulline: R131, S180, S189, E265, and Y277.

The protein belongs to the argininosuccinate synthase family. Type 1 subfamily. Homotetramer.

Its subcellular location is the cytoplasm. The enzyme catalyses L-citrulline + L-aspartate + ATP = 2-(N(omega)-L-arginino)succinate + AMP + diphosphate + H(+). It participates in amino-acid biosynthesis; L-arginine biosynthesis; L-arginine from L-ornithine and carbamoyl phosphate: step 2/3. The protein is Argininosuccinate synthase of Vibrio cholerae serotype O1 (strain ATCC 39541 / Classical Ogawa 395 / O395).